The primary structure comprises 576 residues: Aspartate--tRNA ligase (576 aa).

Glutamate 170 is a binding site for L-aspartate. An aspartate region spans residues 194 to 197 (QLFK). Arginine 216 provides a ligand contact to L-aspartate. ATP contacts are provided by residues 216–218 (RDE) and glutamine 225. Position 438 (histidine 438) interacts with L-aspartate. Position 471 (glutamate 471) interacts with ATP. An L-aspartate-binding site is contributed by arginine 478. An ATP-binding site is contributed by 523-526 (GLDR).

It belongs to the class-II aminoacyl-tRNA synthetase family. Type 1 subfamily. Homodimer.

The protein localises to the cytoplasm. It carries out the reaction tRNA(Asp) + L-aspartate + ATP = L-aspartyl-tRNA(Asp) + AMP + diphosphate. Catalyzes the attachment of L-aspartate to tRNA(Asp) in a two-step reaction: L-aspartate is first activated by ATP to form Asp-AMP and then transferred to the acceptor end of tRNA(Asp). The protein is Aspartate--tRNA ligase of Fervidobacterium nodosum (strain ATCC 35602 / DSM 5306 / Rt17-B1).